Here is an 88-residue protein sequence, read N- to C-terminus: Potassium channel toxin MeuTXKbeta3-meucin-24 (88 aa).

The first 22 residues, 1 to 22 (MMKQQFFLFLAVIVMISSVIEA), serve as a signal peptide directing secretion. The region spanning 55–88 (EYACPVIEKWCEDHCQAKNAIGRCENTECKCLSK) is the BetaSPN-type CS-alpha/beta domain. Disulfide bonds link C58/C78, C65/C83, and C69/C85.

It belongs to the long chain scorpion toxin family. Class 2 subfamily. As to expression, expressed by the venom gland.

The protein localises to the secreted. In terms of biological role, inhibits voltage-gated potassium channels. Its function is as follows. The synthetic meucin-24 inhibits the development of P.berghei ookinetes, kills intraerythrocytic P.falciparum, and is cytotoxic to the Drosophila S2 cells at micromolar concentrations. No antibacterial, antifungal and hemolytic activities have been found at micromolar concentrations. The chain is Potassium channel toxin MeuTXKbeta3-meucin-24 from Mesobuthus eupeus (Lesser Asian scorpion).